We begin with the raw amino-acid sequence, 448 residues long: Protein ECM7 (448 aa).

Residues Met1–Arg28 lie on the Cytoplasmic side of the membrane. The chain crosses the membrane as a helical span at residues Leu29–Ser49. Topologically, residues Pro50 to Asn204 are extracellular. The chain crosses the membrane as a helical span at residues Val205–Trp225. The Cytoplasmic segment spans residues Tyr226–Asn246. A helical transmembrane segment spans residues Ser247–Val267. Residues Asn268–His287 lie on the Extracellular side of the membrane. The helical transmembrane segment at Leu288–Leu308 threads the bilayer. Over Ala309–Phe448 the chain is Cytoplasmic. Composition is skewed to polar residues over residues Tyr351–Gly363 and Val383–Asn406. Disordered regions lie at residues Tyr351–Glu411 and Arg427–Phe448.

Its subcellular location is the membrane. May be involved in cell wall organization and biogenesis. This is Protein ECM7 (ECM7) from Saccharomyces cerevisiae (strain ATCC 204508 / S288c) (Baker's yeast).